A 398-amino-acid polypeptide reads, in one-letter code: Ribosomal RNA large subunit methyltransferase F (398 aa).

The span at 1–12 (MTPSRKPARPGA) shows a compositional bias: basic residues. Residues 1 to 85 (MTPSRKPARP…RNLHGQGYDF (85 aa)) are disordered. 2 stretches are compositionally biased toward low complexity: residues 20–40 (PSAK…AQPK) and 48–59 (QAKSQAKPQAKS).

This sequence belongs to the methyltransferase superfamily. METTL16/RlmF family.

It localises to the cytoplasm. It catalyses the reaction adenosine(1618) in 23S rRNA + S-adenosyl-L-methionine = N(6)-methyladenosine(1618) in 23S rRNA + S-adenosyl-L-homocysteine + H(+). Its function is as follows. Specifically methylates the adenine in position 1618 of 23S rRNA. This Shewanella loihica (strain ATCC BAA-1088 / PV-4) protein is Ribosomal RNA large subunit methyltransferase F.